The chain runs to 511 residues: Aminotransferase FGSG_17085 (511 aa).

Gly165 to Ala166 is a pyridoxal 5'-phosphate binding site. Tyr200 lines the substrate pocket. Residue Asp310 coordinates pyridoxal 5'-phosphate. At Lys339 the chain carries N6-(pyridoxal phosphate)lysine. Gly371 provides a ligand contact to substrate. His372–Thr373 lines the pyridoxal 5'-phosphate pocket.

Belongs to the class-III pyridoxal-phosphate-dependent aminotransferase family. It depends on pyridoxal 5'-phosphate as a cofactor.

It functions in the pathway secondary metabolite biosynthesis. Aminotransferase; part of the gene cluster that mediates the biosynthesis of the lipopeptide fusaristatin A. Fusaristatin A consists of a polyketide chain linked to three amino acid residues glutamine (Gln), dehydroalanine (dehydro-Ala), and beta-aminoisobutyric acid. The biosynthesis starts with formation of a linear polyketide chain by the highly reducing polyketide synthase PKS6. The gene cluster does not contain an acyl-CoA ligase or an acyl-transferase, and it is therefore predicted that the polyketide is transferred directly to the nonribosomal peptide synthetase NRPS7. Modules 1-3 from NRPS7 incorporate dehydro-Ala, Gln, and beta-aminoisobutyric acid in the compound, which is released by cyclization. The beta-aminoisobutyric acid units are most likely not freely available to the NRPS, but can be synthesized from thymine, which requires a dehydrogenase, a monooxygenase, and an aminotransferase. The fusaristatin A cluster contains a cytochrome P450 monooxygenase (FGSG_08207) and an aminotransferase (FGSG_17085), which theoretically can perform two of the enzymatic steps. The enzymes may however also be involved in biosynthesis of dehydroalanine or modification of the polyketide. The dehydro-Ala residue can be a result of cyclization, where serine is dehydrated. The last gene of the cluster encodes a protein with an A/B barrel domain found in variable enzymes, which hampers functional prediction. This chain is Aminotransferase FGSG_17085, found in Gibberella zeae (strain ATCC MYA-4620 / CBS 123657 / FGSC 9075 / NRRL 31084 / PH-1) (Wheat head blight fungus).